Reading from the N-terminus, the 295-residue chain is Bifunctional protein FolD (295 aa).

NADP(+) contacts are provided by residues 165–167 (GRS), serine 190, and isoleucine 231.

The protein belongs to the tetrahydrofolate dehydrogenase/cyclohydrolase family. Homodimer.

The enzyme catalyses (6R)-5,10-methylene-5,6,7,8-tetrahydrofolate + NADP(+) = (6R)-5,10-methenyltetrahydrofolate + NADPH. It carries out the reaction (6R)-5,10-methenyltetrahydrofolate + H2O = (6R)-10-formyltetrahydrofolate + H(+). Its pathway is one-carbon metabolism; tetrahydrofolate interconversion. Functionally, catalyzes the oxidation of 5,10-methylenetetrahydrofolate to 5,10-methenyltetrahydrofolate and then the hydrolysis of 5,10-methenyltetrahydrofolate to 10-formyltetrahydrofolate. The protein is Bifunctional protein FolD of Nitrosomonas europaea (strain ATCC 19718 / CIP 103999 / KCTC 2705 / NBRC 14298).